We begin with the raw amino-acid sequence, 261 residues long: Indole-3-glycerol phosphate synthase (261 aa).

Belongs to the TrpC family.

It catalyses the reaction 1-(2-carboxyphenylamino)-1-deoxy-D-ribulose 5-phosphate + H(+) = (1S,2R)-1-C-(indol-3-yl)glycerol 3-phosphate + CO2 + H2O. It participates in amino-acid biosynthesis; L-tryptophan biosynthesis; L-tryptophan from chorismate: step 4/5. In Burkholderia mallei (strain NCTC 10247), this protein is Indole-3-glycerol phosphate synthase.